The chain runs to 65 residues: Photosystem II reaction center protein Z (65 aa).

2 consecutive transmembrane segments (helical) span residues 11–31 and 44–64; these read LVLALIIFSFILVLTLPVIFA and WLACRFWFFLVFLIGILDGIF.

The protein belongs to the PsbZ family. As to quaternary structure, PSII is composed of 1 copy each of membrane proteins PsbA, PsbB, PsbC, PsbD, PsbE, PsbF, PsbH, PsbI, PsbJ, PsbK, PsbL, PsbM, PsbT, PsbY, PsbZ, Psb30/Ycf12, at least 3 peripheral proteins of the oxygen-evolving complex and a large number of cofactors. It forms dimeric complexes.

It is found in the plastid. Its subcellular location is the chloroplast thylakoid membrane. In terms of biological role, may control the interaction of photosystem II (PSII) cores with the light-harvesting antenna, regulates electron flow through the 2 photosystem reaction centers. PSII is a light-driven water plastoquinone oxidoreductase, using light energy to abstract electrons from H(2)O, generating a proton gradient subsequently used for ATP formation. In Euglena gracilis, this protein is Photosystem II reaction center protein Z.